The following is a 338-amino-acid chain: Phenylalanine--tRNA ligase alpha subunit (338 aa).

Glu-252 is a binding site for Mg(2+).

The protein belongs to the class-II aminoacyl-tRNA synthetase family. Phe-tRNA synthetase alpha subunit type 1 subfamily. In terms of assembly, tetramer of two alpha and two beta subunits. Mg(2+) is required as a cofactor.

The protein localises to the cytoplasm. The enzyme catalyses tRNA(Phe) + L-phenylalanine + ATP = L-phenylalanyl-tRNA(Phe) + AMP + diphosphate + H(+). In Pseudomonas aeruginosa (strain UCBPP-PA14), this protein is Phenylalanine--tRNA ligase alpha subunit.